The following is a 42-amino-acid chain: Iota-conotoxin-like R11.16 (42 aa).

4 disulfides stabilise this stretch: C5-C19, C12-C22, C18-C27, and C21-C36.

This sequence belongs to the conotoxin I1 superfamily. In terms of tissue distribution, expressed by the venom duct.

The protein resides in the secreted. In terms of biological role, iota-conotoxins bind to voltage-gated sodium channels (Nav) and act as agonists by shifting the voltage-dependence of activation to more hyperpolarized levels. Produces general excitatory symptoms. The protein is Iota-conotoxin-like R11.16 of Conus radiatus (Rayed cone).